The primary structure comprises 222 residues: Ribonuclease T (222 aa).

An Exonuclease domain is found at 20–194; that stretch reads VVIDVETAGF…YDTERTAELF (175 aa). Mg(2+) contacts are provided by aspartate 23, glutamate 25, histidine 181, and aspartate 186. Catalysis depends on histidine 181, which acts as the Proton donor/acceptor.

The protein belongs to the RNase T family. Homodimer. Mg(2+) is required as a cofactor.

Trims short 3' overhangs of a variety of RNA species, leaving a one or two nucleotide 3' overhang. Responsible for the end-turnover of tRNA: specifically removes the terminal AMP residue from uncharged tRNA (tRNA-C-C-A). Also appears to be involved in tRNA biosynthesis. This Shewanella sp. (strain MR-4) protein is Ribonuclease T.